The primary structure comprises 906 residues: DNA mismatch repair protein MutS (906 aa).

656-663 (GPNMAGKS) serves as a coordination point for ATP.

It belongs to the DNA mismatch repair MutS family.

In terms of biological role, this protein is involved in the repair of mismatches in DNA. It is possible that it carries out the mismatch recognition step. This protein has a weak ATPase activity. The sequence is that of DNA mismatch repair protein MutS from Rhodopseudomonas palustris (strain BisA53).